The sequence spans 200 residues: Large ribosomal subunit protein uL22c (200 aa).

This sequence belongs to the universal ribosomal protein uL22 family. Part of the 50S ribosomal subunit.

It is found in the plastid. It localises to the chloroplast. This protein binds specifically to 23S rRNA. Functionally, the globular domain of the protein is located near the polypeptide exit tunnel on the outside of the subunit, while an extended beta-hairpin is found that lines the wall of the exit tunnel in the center of the 70S ribosome. This Medicago sativa (Alfalfa) protein is Large ribosomal subunit protein uL22c (rpl22).